A 436-amino-acid chain; its full sequence is 3-ketoacyl-CoA thiolase (436 aa).

C99 serves as the catalytic Acyl-thioester intermediate. Active-site proton acceptor residues include H392 and C422.

The protein belongs to the thiolase-like superfamily. Thiolase family. Heterotetramer of two alpha chains (FadJ) and two beta chains (FadI).

It localises to the cytoplasm. The catalysed reaction is an acyl-CoA + acetyl-CoA = a 3-oxoacyl-CoA + CoA. It participates in lipid metabolism; fatty acid beta-oxidation. Functionally, catalyzes the final step of fatty acid oxidation in which acetyl-CoA is released and the CoA ester of a fatty acid two carbons shorter is formed. This is 3-ketoacyl-CoA thiolase from Shewanella denitrificans (strain OS217 / ATCC BAA-1090 / DSM 15013).